We begin with the raw amino-acid sequence, 153 residues long: MKVIFLKDVPNQGKKNEIKEVSDGYARNYLLPNQLVKIATNNSIQTLKDHLKADQEEKELAKAQTKQIKKTLEELTLHFKLQTNDDKVFGSISSQDIVNQLKDVHRIEIDKKKFIHFKNINKIGINYVKVKLDFGIEALIKIDVKEVQKWNKN.

It belongs to the bacterial ribosomal protein bL9 family.

Binds to the 23S rRNA. In Mycoplasma mycoides subsp. mycoides SC (strain CCUG 32753 / NCTC 10114 / PG1), this protein is Large ribosomal subunit protein bL9.